We begin with the raw amino-acid sequence, 234 residues long: Synaptogyrin-4 (234 aa).

Residues 18–169 enclose the MARVEL domain; it reads FLRRPKTITR…QAYLAFQDLR (152 aa). 4 helical membrane passes run 25–45, 66–86, 104–124, and 145–165; these read ITRV…LTDG, CSFA…FLVL, LLDF…FCFL, and AAIA…YLAF.

It belongs to the synaptogyrin family.

It localises to the membrane. This chain is Synaptogyrin-4 (SYNGR4), found in Homo sapiens (Human).